Reading from the N-terminus, the 67-residue chain is Epsilon-conotoxin TxVA (67 aa).

The first 19 residues, Met-1–Cys-19, serve as a signal peptide directing secretion. Residues Phe-20–Arg-50 constitute a propeptide that is removed on maturation. 2 positions are modified to 4-carboxyglutamate: Glu-51 and Glu-54. 2 disulfides stabilise this stretch: Cys-52/Cys-58 and Cys-53/Cys-59. Trp-57 bears the 6'-bromotryptophan mark. Thr-60 carries O-linked (GalNAc...) threonine glycosylation. Pro-63 carries the 4-hydroxyproline modification. Residues Leu-64 to Arg-67 constitute a propeptide that is removed on maturation.

Post-translationally, O-glycan consists of the disaccharide Gal-GalNAc. In terms of tissue distribution, expressed by the venom duct.

It is found in the secreted. Its function is as follows. Epsilon-conotoxins act at presynaptic membranes, blocking the calcium channels or G protein-coupled receptors. Causes hyperactivity upon intracranial injection into mice. Causes dorsal fins drooping in fish. In Conus textile (Cloth-of-gold cone), this protein is Epsilon-conotoxin TxVA.